Here is a 282-residue protein sequence, read N- to C-terminus: HTH-type transcriptional activator RhaR (282 aa).

One can recognise an HTH araC/xylS-type domain in the interval 179–277; the sequence is DKLITRLAAS…GMTPSQWRHL (99 aa). 2 DNA-binding regions (H-T-H motif) span residues 196-217 and 244-267; these read DKFC…RQQT and ISDI…TRET.

As to quaternary structure, binds DNA as a dimer.

Its subcellular location is the cytoplasm. Activates expression of the rhaSR operon in response to L-rhamnose. This chain is HTH-type transcriptional activator RhaR, found in Escherichia coli O1:K1 / APEC.